The sequence spans 438 residues: Serine hydroxymethyltransferase (438 aa).

Residues Leu119 and 123–125 (GHL) contribute to the (6S)-5,6,7,8-tetrahydrofolate site. Lys228 carries the N6-(pyridoxal phosphate)lysine modification. Residue 370–372 (SPF) participates in (6S)-5,6,7,8-tetrahydrofolate binding.

This sequence belongs to the SHMT family. Homodimer. Pyridoxal 5'-phosphate serves as cofactor.

The protein resides in the cytoplasm. The enzyme catalyses (6R)-5,10-methylene-5,6,7,8-tetrahydrofolate + glycine + H2O = (6S)-5,6,7,8-tetrahydrofolate + L-serine. Its pathway is one-carbon metabolism; tetrahydrofolate interconversion. The protein operates within amino-acid biosynthesis; glycine biosynthesis; glycine from L-serine: step 1/1. Catalyzes the reversible interconversion of serine and glycine with tetrahydrofolate (THF) serving as the one-carbon carrier. This reaction serves as the major source of one-carbon groups required for the biosynthesis of purines, thymidylate, methionine, and other important biomolecules. Also exhibits THF-independent aldolase activity toward beta-hydroxyamino acids, producing glycine and aldehydes, via a retro-aldol mechanism. This Pelodictyon phaeoclathratiforme (strain DSM 5477 / BU-1) protein is Serine hydroxymethyltransferase.